A 119-amino-acid polypeptide reads, in one-letter code: Protein TusC (119 aa).

It belongs to the DsrF/TusC family. In terms of assembly, heterohexamer, formed by a dimer of trimers. The hexameric TusBCD complex contains 2 copies each of TusB, TusC and TusD. The TusBCD complex interacts with TusE.

It localises to the cytoplasm. In terms of biological role, part of a sulfur-relay system required for 2-thiolation of 5-methylaminomethyl-2-thiouridine (mnm(5)s(2)U) at tRNA wobble positions. In Sodalis glossinidius (strain morsitans), this protein is Protein TusC.